The chain runs to 269 residues: MNMEDAARGIELVRKQKPLVHNMTNNVVTNFTANGLLALGASPVMAYAREEAADMAKIAGALVLNIGTLSRESVEAMIIAGKSANEHGVPVIFDPVGAGATPFRTESAQAIMRKVKVSAVRGNAAEIANTLGEDWLIKGVDAGEESGDRTELAKKAAKLWDTAVIITGAEDVITDGTKTYTVGNGHQLLTKVTGTGCLFTSVIGAFCAVEKDVCRAAVSAAAFYGTAAELAAAKTESRGPGSFQIEFLNQLAAVEAMDIKERGRIREVE.

Met45 is a binding site for substrate. 2 residues coordinate ATP: Arg121 and Thr167. Position 194 (Gly194) interacts with substrate.

The protein belongs to the Thz kinase family. Mg(2+) serves as cofactor.

The enzyme catalyses 5-(2-hydroxyethyl)-4-methylthiazole + ATP = 4-methyl-5-(2-phosphooxyethyl)-thiazole + ADP + H(+). Its pathway is cofactor biosynthesis; thiamine diphosphate biosynthesis; 4-methyl-5-(2-phosphoethyl)-thiazole from 5-(2-hydroxyethyl)-4-methylthiazole: step 1/1. In terms of biological role, catalyzes the phosphorylation of the hydroxyl group of 4-methyl-5-beta-hydroxyethylthiazole (THZ). The chain is Hydroxyethylthiazole kinase from Bacillus licheniformis (strain ATCC 14580 / DSM 13 / JCM 2505 / CCUG 7422 / NBRC 12200 / NCIMB 9375 / NCTC 10341 / NRRL NRS-1264 / Gibson 46).